Consider the following 2184-residue polypeptide: Chromodomain-helicase-DNA-binding protein 8 (2184 aa).

Disordered regions lie at residues 379–399 (VKTSTGGGESRKLDSQKKQEK) and 419–527 (IPRV…KRKK). Over residues 387-399 (ESRKLDSQKKQEK) the composition is skewed to basic and acidic residues. Positions 425–437 (EDELPSVNPEDDD) are enriched in acidic residues. Positions 448-459 (GETSDRSKDEKP) are enriched in basic and acidic residues. A compositionally biased stretch (basic residues) spans 516–527 (KRRSNRQVKRKK). 2 consecutive Chromo domains span residues 586-653 (AIVD…TQMQ) and 668-734 (VEVD…RVAR). Positions 767–941 (LFNWYNRQNC…FSLLHFLEPT (175 aa)) constitute a Helicase ATP-binding domain. Residue 780–787 (DEMGLGKT) coordinates ATP. Residues 892–895 (DEAH) carry the DEAH box motif. In terms of domain architecture, Helicase C-terminal spans 1081 to 1252 (LIDKLLPKLR…FTKKEIEDLL (172 aa)). 2 disordered regions span residues 1907 to 1989 (GISG…EESR) and 2039 to 2076 (WSSPRRLSDPPSDSPDSLPPTPEQQSPAHFTQIRPAPD). 2 stretches are compositionally biased toward low complexity: residues 1912-1961 (SRPS…SNSE) and 2040-2054 (SSPRRLSDPPSDSPD).

The protein belongs to the SNF2/RAD54 helicase family. CHD8 subfamily. In terms of assembly, component of some MLL1/MLL complex.

Its subcellular location is the nucleus. It carries out the reaction ATP + H2O = ADP + phosphate + H(+). Its function is as follows. ATP-dependent chromatin-remodeling factor, it slides nucleosomes along DNA; nucleosome sliding requires ATP. Acts as a transcription repressor by remodeling chromatin structure and recruiting histone H1 to target genes. Suppresses p53/tp53-mediated apoptosis by recruiting histone H1 and preventing p53/tp53 transactivation activity. Acts as a negative regulator of Wnt signaling pathway by regulating beta-catenin (ctnnb1) activity. Negatively regulates ctnnb1-targeted gene expression by being recruited specifically to the promoter regions of several ctnnb1 responsive genes. May also act as a transcription activator by participating in efficient U6 RNA polymerase III transcription. The protein is Chromodomain-helicase-DNA-binding protein 8 of Xenopus tropicalis (Western clawed frog).